A 190-amino-acid polypeptide reads, in one-letter code: MFKNAFQSGFLSVLYSIGSKPLEIWDKQVSNGHIKRITDADIQSSVLEIMGQNVSTTYITCPADPNKTLGIKLPFLVLIIKNLNKYFSFEVQVLDDKNVRRRFRASNYQSTTRVKPFICTMPMRLDSGWNQIQFNLSDFTRRAYGTNYIETLRVQVHANCRIRRIYFSDRLYSEEELPAEFKLFLPIQKS.

The protein belongs to the CFAP20 family.

It is found in the cytoplasm. The protein resides in the cytoskeleton. It localises to the flagellum axoneme. Its subcellular location is the flagellum basal body. Functionally, cilium- and flagellum-specific protein that plays a role in axonemal structure organization and motility. Involved in the control of flagellar beating in an asymmetric and planar waveform. Stabilizes outer doublet microtubules (DMTs) of the axoneme and may work as a scaffold for intratubular proteins, such as tektin and PACRG, to produce the beak structures in DMT1, 5 and 6. Not essential for flagellar assembly. The chain is Cilia- and flagella-associated protein 20 (CFAP20) from Chlamydomonas reinhardtii (Chlamydomonas smithii).